We begin with the raw amino-acid sequence, 450 residues long: Glucose-6-phosphate isomerase (450 aa).

Residue threonine 39 is modified to Phosphothreonine. Glutamate 291 (proton donor) is an active-site residue. Active-site residues include histidine 312 and lysine 426.

Belongs to the GPI family.

The protein localises to the cytoplasm. It catalyses the reaction alpha-D-glucose 6-phosphate = beta-D-fructose 6-phosphate. It participates in carbohydrate biosynthesis; gluconeogenesis. It functions in the pathway carbohydrate degradation; glycolysis; D-glyceraldehyde 3-phosphate and glycerone phosphate from D-glucose: step 2/4. In terms of biological role, catalyzes the reversible isomerization of glucose-6-phosphate to fructose-6-phosphate. The protein is Glucose-6-phosphate isomerase of Bacillus cereus (strain G9842).